We begin with the raw amino-acid sequence, 612 residues long: Elongation factor 4 (612 aa).

Positions 12-194 (SRIRNFSIIA…QIVEKVPAPA (183 aa)) constitute a tr-type G domain. GTP contacts are provided by residues 24 to 29 (DHGKST) and 141 to 144 (NKID).

The protein belongs to the TRAFAC class translation factor GTPase superfamily. Classic translation factor GTPase family. LepA subfamily.

The protein resides in the cell membrane. It catalyses the reaction GTP + H2O = GDP + phosphate + H(+). In terms of biological role, required for accurate and efficient protein synthesis under certain stress conditions. May act as a fidelity factor of the translation reaction, by catalyzing a one-codon backward translocation of tRNAs on improperly translocated ribosomes. Back-translocation proceeds from a post-translocation (POST) complex to a pre-translocation (PRE) complex, thus giving elongation factor G a second chance to translocate the tRNAs correctly. Binds to ribosomes in a GTP-dependent manner. The chain is Elongation factor 4 from Bacillus pumilus (strain SAFR-032).